The chain runs to 228 residues: Translin (228 aa).

The segment at 86 to 90 is DNA/RNA binding; sequence RFHEH. The interval 177–198 is leucine-zipper; sequence LDSGFRLLNLKNDSLRKRYDGL. K187 bears the N6-acetyllysine mark. Phosphoserine is present on S190. An N6-acetyllysine modification is found at K199.

This sequence belongs to the translin family. In terms of assembly, ring-shaped heterooctamer of six TSN and two TSNAX subunits, DNA/RNA binding occurs inside the ring.

Its subcellular location is the cytoplasm. The protein localises to the nucleus. DNA-binding protein that specifically recognizes consensus sequences at the breakpoint junctions in chromosomal translocations, mostly involving immunoglobulin (Ig)/T-cell receptor gene segments. Seems to recognize single-stranded DNA ends generated by staggered breaks occurring at recombination hot spots. Its function is as follows. Exhibits both single-stranded and double-stranded endoribonuclease activity. May act as an activator of RNA-induced silencing complex (RISC) by facilitating endonucleolytic cleavage of the siRNA passenger strand. In Cricetulus griseus (Chinese hamster), this protein is Translin (TSN).